Reading from the N-terminus, the 425-residue chain is Perilipin-2 (425 aa).

Ala-2 carries the post-translational modification N-acetylalanine. A Phosphoserine modification is found at Ser-213. Phosphotyrosine is present on Tyr-230.

This sequence belongs to the perilipin family. As to quaternary structure, interacts with IRGC. Acylated; primarily with C14, C16 and C18 fatty acids. Post-translationally, phosphorylation at Tyr-230 by isoform 1 of CHKA (CHKalpha2) promotes dissociation from lipid droplets: dissociation is followed by recruitment of autophagosome machinery to lipid droplets and subsequent lipid droplet lipolysis. In terms of processing, polyubiquitination of Nt-acetylatable A-PLIN2 by MARCHF6 lead to degradation by 26S proteasomes. In terms of tissue distribution, adipose tissue specific. Expressed abundantly and preferentially in fat pads.

It is found in the membrane. Its subcellular location is the lipid droplet. In terms of biological role, structural component of lipid droplets, which is required for the formation and maintenance of lipid storage droplets. The protein is Perilipin-2 of Mus musculus (Mouse).